The following is a 631-amino-acid chain: Phosphomethylpyrimidine synthase (631 aa).

Residues Asn239, Met268, Tyr297, His333, 353–355 (SRG), 394–397 (DGLR), and Glu433 contribute to the substrate site. His437 is a Zn(2+) binding site. Tyr460 serves as a coordination point for substrate. His501 contributes to the Zn(2+) binding site. 3 residues coordinate [4Fe-4S] cluster: Cys581, Cys584, and Cys589.

Belongs to the ThiC family. In terms of assembly, homodimer. [4Fe-4S] cluster serves as cofactor.

The enzyme catalyses 5-amino-1-(5-phospho-beta-D-ribosyl)imidazole + S-adenosyl-L-methionine = 4-amino-2-methyl-5-(phosphooxymethyl)pyrimidine + CO + 5'-deoxyadenosine + formate + L-methionine + 3 H(+). It participates in cofactor biosynthesis; thiamine diphosphate biosynthesis. Its function is as follows. Catalyzes the synthesis of the hydroxymethylpyrimidine phosphate (HMP-P) moiety of thiamine from aminoimidazole ribotide (AIR) in a radical S-adenosyl-L-methionine (SAM)-dependent reaction. In Escherichia coli O139:H28 (strain E24377A / ETEC), this protein is Phosphomethylpyrimidine synthase.